Here is a 256-residue protein sequence, read N- to C-terminus: GDSL esterase/lipase CPRD49 (256 aa).

An N-terminal signal peptide occupies residues 1–27 (MVGPARPQIVLFGSSIVQMSFGHGGWG). Catalysis depends on S15, which acts as the Nucleophile. 2 N-linked (GlcNAc...) asparagine glycosylation sites follow: N49 and N79. The active site involves H213. A glycan (N-linked (GlcNAc...) asparagine) is linked at N243.

This sequence belongs to the 'GDSL' lipolytic enzyme family. Specifically expressed in anthers (stages 8-12).

It localises to the secreted. In Arabidopsis thaliana (Mouse-ear cress), this protein is GDSL esterase/lipase CPRD49 (CPRD49).